The following is a 247-amino-acid chain: Adenosylcobinamide-GDP ribazoletransferase (247 aa).

6 helical membrane-spanning segments follow: residues 31-51 (ILFY…VTCI), 55-75 (LPAL…TGGL), 109-129 (IGVL…YVLI), 135-155 (LFLI…FLTT), 183-203 (VLLL…SFLI), and 227-247 (AIEI…FYLV).

This sequence belongs to the CobS family. Requires Mg(2+) as cofactor.

It is found in the cell inner membrane. It catalyses the reaction alpha-ribazole + adenosylcob(III)inamide-GDP = adenosylcob(III)alamin + GMP + H(+). The enzyme catalyses alpha-ribazole 5'-phosphate + adenosylcob(III)inamide-GDP = adenosylcob(III)alamin 5'-phosphate + GMP + H(+). It participates in cofactor biosynthesis; adenosylcobalamin biosynthesis; adenosylcobalamin from cob(II)yrinate a,c-diamide: step 7/7. In terms of biological role, joins adenosylcobinamide-GDP and alpha-ribazole to generate adenosylcobalamin (Ado-cobalamin). Also synthesizes adenosylcobalamin 5'-phosphate from adenosylcobinamide-GDP and alpha-ribazole 5'-phosphate. The sequence is that of Adenosylcobinamide-GDP ribazoletransferase from Acinetobacter baumannii (strain ACICU).